The sequence spans 484 residues: Cysteine--tRNA ligase (484 aa).

Residue Cys-29 coordinates Zn(2+). The short motif at 31 to 41 (ITVYDYCHLGH) is the 'HIGH' region element. Zn(2+) contacts are provided by Cys-215, His-240, and Glu-244. The 'KMSKS' region motif lies at 272–276 (KMSKS). Lys-275 provides a ligand contact to ATP.

The protein belongs to the class-I aminoacyl-tRNA synthetase family. Monomer. Zn(2+) serves as cofactor.

Its subcellular location is the cytoplasm. It carries out the reaction tRNA(Cys) + L-cysteine + ATP = L-cysteinyl-tRNA(Cys) + AMP + diphosphate. The sequence is that of Cysteine--tRNA ligase from Rippkaea orientalis (strain PCC 8801 / RF-1) (Cyanothece sp. (strain PCC 8801)).